The sequence spans 213 residues: Orotate phosphoribosyltransferase (213 aa).

Lysine 26 serves as a coordination point for 5-phospho-alpha-D-ribose 1-diphosphate. 34 to 35 (FF) serves as a coordination point for orotate. Residues 72 to 73 (YK), arginine 99, lysine 100, lysine 103, histidine 105, and 124 to 132 (DDVITAGTA) each bind 5-phospho-alpha-D-ribose 1-diphosphate. Residues threonine 128 and arginine 156 each contribute to the orotate site.

It belongs to the purine/pyrimidine phosphoribosyltransferase family. PyrE subfamily. Homodimer. Requires Mg(2+) as cofactor.

It carries out the reaction orotidine 5'-phosphate + diphosphate = orotate + 5-phospho-alpha-D-ribose 1-diphosphate. It participates in pyrimidine metabolism; UMP biosynthesis via de novo pathway; UMP from orotate: step 1/2. Catalyzes the transfer of a ribosyl phosphate group from 5-phosphoribose 1-diphosphate to orotate, leading to the formation of orotidine monophosphate (OMP). The protein is Orotate phosphoribosyltransferase of Actinobacillus pleuropneumoniae serotype 5b (strain L20).